Consider the following 403-residue polypeptide: SEC14-like protein 2 (403 aa).

Residues K11 and K51 each carry the N6-succinyllysine modification. The region spanning 76-249 (PPEVVQQYLS…EYGGTMTDPD (174 aa)) is the CRAL-TRIO domain. 2 positions are modified to N6-succinyllysine: K253 and K257. One can recognise a GOLD domain in the interval 275–383 (KQQYEHSVQI…AKKVSFTVEV (109 aa)). K393 is subject to N6-succinyllysine.

In terms of assembly, monomer. The N-terminus is blocked.

Its subcellular location is the cytoplasm. The protein localises to the nucleus. Carrier protein. Binds to some hydrophobic molecules and promotes their transfer between the different cellular sites. Binds with high affinity to alpha-tocopherol. Also binds with a weaker affinity to other tocopherols and to tocotrienols. May have a transcriptional activatory activity via its association with alpha-tocopherol. Probably recognizes and binds some squalene structure, suggesting that it may regulate cholesterol biosynthesis by increasing the transfer of squalene to a metabolic active pool in the cell. The chain is SEC14-like protein 2 (SEC14L2) from Bos taurus (Bovine).